The following is a 442-amino-acid chain: 3-phosphoshikimate 1-carboxyvinyltransferase (442 aa).

Positions 1–11 are enriched in polar residues; the sequence is MQVSRPLTVSA. Residues 1–25 form a disordered region; it reads MQVSRPLTVSASPKGLSGRTRVPGD. Residues K26, S27, and R31 each contribute to the 3-phosphoshikimate site. Residue K26 coordinates phosphoenolpyruvate. Phosphoenolpyruvate is bound by residues G98 and R126. 3-phosphoshikimate contacts are provided by S171, Q173, D324, and K351. Q173 lines the phosphoenolpyruvate pocket. The active-site Proton acceptor is the D324. R355 and R398 together coordinate phosphoenolpyruvate.

Belongs to the EPSP synthase family. In terms of assembly, monomer.

It localises to the cytoplasm. The enzyme catalyses 3-phosphoshikimate + phosphoenolpyruvate = 5-O-(1-carboxyvinyl)-3-phosphoshikimate + phosphate. It participates in metabolic intermediate biosynthesis; chorismate biosynthesis; chorismate from D-erythrose 4-phosphate and phosphoenolpyruvate: step 6/7. Functionally, catalyzes the transfer of the enolpyruvyl moiety of phosphoenolpyruvate (PEP) to the 5-hydroxyl of shikimate-3-phosphate (S3P) to produce enolpyruvyl shikimate-3-phosphate and inorganic phosphate. This Gluconobacter oxydans (strain 621H) (Gluconobacter suboxydans) protein is 3-phosphoshikimate 1-carboxyvinyltransferase.